Reading from the N-terminus, the 102-residue chain is Fe-S protein maturation auxiliary factor YitW (102 aa).

It belongs to the MIP18 family.

Involved in the maturation of iron-sulfur (Fe-S) proteins. May function as a Fe-S cluster carrier. This Bacillus subtilis (strain 168) protein is Fe-S protein maturation auxiliary factor YitW (yitW).